The chain runs to 160 residues: Glucagon-1 (160 aa).

An N-terminal signal peptide occupies residues 1–22 (MSDPGFLAAPVLLLLLVSLASA). 3 consecutive propeptides follow at residues 23–40 (SLEQ…RPLS), 74–79 (GGSELQ), and 116–127 (DGGDHLAENSED). Residues 112-132 (KSRRDGGDHLAENSEDKRHAE) form a disordered region.

This sequence belongs to the glucagon family.

The protein resides in the secreted. Its function is as follows. Promotes hydrolysis of glycogen and lipids, and raises the blood sugar level. This is Glucagon-1 (gcg1) from Petromyzon marinus (Sea lamprey).